Here is a 262-residue protein sequence, read N- to C-terminus: Small ribosomal subunit protein eS1 (262 aa).

This sequence belongs to the eukaryotic ribosomal protein eS1 family. As to quaternary structure, component of the small ribosomal subunit. Mature ribosomes consist of a small (40S) and a large (60S) subunit. The 40S subunit contains about 33 different proteins and 1 molecule of RNA (18S). The 60S subunit contains about 49 different proteins and 3 molecules of RNA (25S, 5.8S and 5S).

It is found in the cytoplasm. This Brassica campestris (Field mustard) protein is Small ribosomal subunit protein eS1.